A 427-amino-acid chain; its full sequence is Beta-porphyranase D (427 aa).

Residues 1-19 (MILKQAILTLVLVNANLFA) form the signal peptide. The segment at 23–45 (PKTYSSTDKETRQGPPKPPMGKR) is disordered. The GH16 domain maps to 32–308 (ETRQGPPKPP…WVRAYRLVDV (277 aa)). Residues tryptophan 73, arginine 76, glutamate 168, glutamate 173, and glutamate 272 each coordinate substrate. The active-site Nucleophile is glutamate 168. Glutamate 173 serves as the catalytic Proton donor.

Belongs to the glycosyl hydrolase 16 family.

It localises to the periplasm. The enzyme catalyses Hydrolysis of beta-D-galactopyranose-(1-&gt;4)-alpha-L-galactopyranose-6-sulfate linkages in porphyran.. Cleaves the sulfated polysaccharide porphyran at the (1-&gt;4) linkages between beta-D-galactopyranose and alpha-L-galactopyranose-6-sulfate, forming mostly the disaccharide alpha-L-galactopyranose-6-sulfate-(1-&gt;3)-beta-D-galactose. In Zobellia galactanivorans (strain DSM 12802 / CCUG 47099 / CIP 106680 / NCIMB 13871 / Dsij), this protein is Beta-porphyranase D (porD).